Here is a 517-residue protein sequence, read N- to C-terminus: GTPase Obg (517 aa).

An Obg domain is found at 2 to 159; the sequence is ATFVDTVTLH…GDVVLELKVV (158 aa). The OBG-type G domain maps to 160–336; that stretch reads ADVALVGYPS…LSFALAELVK (177 aa). GTP is bound by residues 166-173, 191-195, 212-215, 288-291, and 317-319; these read GYPSAGKS, FTTLH, DVPG, NKID, and STV. The Mg(2+) site is built by serine 173 and threonine 193. Residues 355–439 form the OCT domain; it reads PRAVDEKPFT…GDGVVFDWEP (85 aa). Residues 490–517 are disordered; the sequence is EGEAGLWADEDGTGQDGTDEDATTDAKA. Residues 497–517 are compositionally biased toward acidic residues; sequence ADEDGTGQDGTDEDATTDAKA.

The protein belongs to the TRAFAC class OBG-HflX-like GTPase superfamily. OBG GTPase family. Monomer. It depends on Mg(2+) as a cofactor.

Its subcellular location is the cytoplasm. Functionally, an essential GTPase which binds GTP, GDP and possibly (p)ppGpp with moderate affinity, with high nucleotide exchange rates and a fairly low GTP hydrolysis rate. Plays a role in control of the cell cycle, stress response, ribosome biogenesis and in those bacteria that undergo differentiation, in morphogenesis control. The chain is GTPase Obg from Clavibacter sepedonicus (Clavibacter michiganensis subsp. sepedonicus).